We begin with the raw amino-acid sequence, 427 residues long: Chaperone SurA (427 aa).

Residues 1-19 (MKIWKSILFTTLLSCGAVA) form the signal peptide. PpiC domains lie at 170–268 (TVQY…KIED) and 277–377 (VTEV…EVLD).

The protein resides in the periplasm. It carries out the reaction [protein]-peptidylproline (omega=180) = [protein]-peptidylproline (omega=0). Functionally, chaperone involved in the correct folding and assembly of outer membrane proteins. Recognizes specific patterns of aromatic residues and the orientation of their side chains, which are found more frequently in integral outer membrane proteins. May act in both early periplasmic and late outer membrane-associated steps of protein maturation. The polypeptide is Chaperone SurA (Vibrio parahaemolyticus serotype O3:K6 (strain RIMD 2210633)).